The chain runs to 424 residues: Nicotinate phosphoribosyltransferase (424 aa).

Histidine 242 is subject to Phosphohistidine; by autocatalysis.

This sequence belongs to the NAPRTase family. Post-translationally, transiently phosphorylated on a His residue during the reaction cycle. Phosphorylation strongly increases the affinity for substrates and increases the rate of nicotinate D-ribonucleotide production. Dephosphorylation regenerates the low-affinity form of the enzyme, leading to product release.

The enzyme catalyses nicotinate + 5-phospho-alpha-D-ribose 1-diphosphate + ATP + H2O = nicotinate beta-D-ribonucleotide + ADP + phosphate + diphosphate. It functions in the pathway cofactor biosynthesis; NAD(+) biosynthesis; nicotinate D-ribonucleotide from nicotinate: step 1/1. Functionally, catalyzes the synthesis of beta-nicotinate D-ribonucleotide from nicotinate and 5-phospho-D-ribose 1-phosphate at the expense of ATP. The sequence is that of Nicotinate phosphoribosyltransferase from Bartonella bacilliformis (strain ATCC 35685 / KC583 / Herrer 020/F12,63).